We begin with the raw amino-acid sequence, 503 residues long: Cytochrome P450 6l1 (503 aa).

Heme is bound at residue cysteine 438.

The protein belongs to the cytochrome P450 family. It depends on heme as a cofactor. In terms of tissue distribution, detected only in testes and accessory glands of male adults.

It is found in the endoplasmic reticulum membrane. Its subcellular location is the microsome membrane. In Blattella germanica (German cockroach), this protein is Cytochrome P450 6l1 (CYP6L1).